A 354-amino-acid chain; its full sequence is DNA replication and repair protein RecF (354 aa).

Residue 30–37 (GDNGSGKT) coordinates ATP.

This sequence belongs to the RecF family.

It localises to the cytoplasm. Its function is as follows. The RecF protein is involved in DNA metabolism; it is required for DNA replication and normal SOS inducibility. RecF binds preferentially to single-stranded, linear DNA. It also seems to bind ATP. The protein is DNA replication and repair protein RecF of Idiomarina loihiensis (strain ATCC BAA-735 / DSM 15497 / L2-TR).